A 749-amino-acid chain; its full sequence is Serine/threonine-protein phosphatase 4 regulatory subunit 3 (749 aa).

Regulatory subunit 3 (R3) of the histone H2A phosphatase complex (HTP-C) consisting of PPH3, PSY2 and PSY4.

Its subcellular location is the nucleus. Core regulatory subunit of the histone H2A phosphatase complex, which dephosphorylates H2AS128ph (gamma-H2A) that has been displaced from sites of DNA lesions in the double-stranded DNA break repair process. Dephosphorylation is necessary for efficient recovery from the DNA damage checkpoint. In Kluyveromyces lactis (strain ATCC 8585 / CBS 2359 / DSM 70799 / NBRC 1267 / NRRL Y-1140 / WM37) (Yeast), this protein is Serine/threonine-protein phosphatase 4 regulatory subunit 3 (PSY2).